A 192-amino-acid chain; its full sequence is MSERRNTVVELLGENDVSRTVARIAHQIIEKTALDSEGADRVMLLGIPSGGVPLAERLAAKIEEFSGVRVDTGAIDITLYRDDLRNKPHRALQPTSIPSGGIDKTTVVLVDDVLFSGRTVRAALDALRDLGRPNYIQLAVLVDRGHRQLPIRADYVGKNLPTARAEDVTVMLREIDGRDAVTLTREEGEGDN.

Residues 107-119 carry the PRPP-binding motif; the sequence is VVLVDDVLFSGRT.

It belongs to the purine/pyrimidine phosphoribosyltransferase family. PyrR subfamily.

It catalyses the reaction UMP + diphosphate = 5-phospho-alpha-D-ribose 1-diphosphate + uracil. Functionally, regulates the transcription of the pyrimidine nucleotide (pyr) operon in response to exogenous pyrimidines. Also displays a weak uracil phosphoribosyltransferase activity which is not physiologically significant. The polypeptide is Bifunctional protein PyrR (Corynebacterium efficiens (strain DSM 44549 / YS-314 / AJ 12310 / JCM 11189 / NBRC 100395)).